Reading from the N-terminus, the 293-residue chain is ADP-forming sulfoacetate-CoA ligase subunit SauD (293 aa).

CoA is bound by residues 17–20, Lys43, and 96–98; these read TGKE and IAD. Residue His251 is the Tele-phosphohistidine intermediate of the active site.

Belongs to the succinate/malate CoA ligase alpha subunit family. As to quaternary structure, forms a complex with SauC.

It catalyses the reaction sulfoacetate + ATP + CoA = sulfoacetyl-CoA + ADP + phosphate. Its function is as follows. Involved in the degradation of sulfoacetate. Catalyzes the CoA- and ATP-dependent conversion of sulfoacetate to sulfoacetyl-CoA and ADP. Cannot use other sulfonic and carboxylic acids, and shows only residual activity with 3-sulfopropanoate and malonic acid. This chain is ADP-forming sulfoacetate-CoA ligase subunit SauD, found in Bilophila wadsworthia (strain 3_1_6).